A 193-amino-acid chain; its full sequence is MNFLAHLHLAHLADSSLSGNLLADFVRGNPATHYPPDVVEGIYMHRRIDVMTDNLPEVREAREWFRHETRRVASITLDVMWDHFLSRHWTQISPDFPLQAFVGYAHAQVATILPDSPPRFVNLNDYLWSEKWLERYRDMDFIQNVLNGMANRRPRLDALRDSWYDLDAHYDALEERFWHFYPRMMAQAARKAL.

Belongs to the AcpH family.

The enzyme catalyses holo-[ACP] + H2O = apo-[ACP] + (R)-4'-phosphopantetheine + H(+). In terms of biological role, converts holo-ACP to apo-ACP by hydrolytic cleavage of the phosphopantetheine prosthetic group from ACP. In Salmonella agona (strain SL483), this protein is Acyl carrier protein phosphodiesterase.